Reading from the N-terminus, the 183-residue chain is Potassium-transporting ATPase KdpC subunit (183 aa).

The chain crosses the membrane as a helical span at residues 10–30 (ASLLVLSLVTGVAYPLLVTGI).

This sequence belongs to the KdpC family. As to quaternary structure, the system is composed of three essential subunits: KdpA, KdpB and KdpC.

It localises to the cell inner membrane. In terms of biological role, part of the high-affinity ATP-driven potassium transport (or Kdp) system, which catalyzes the hydrolysis of ATP coupled with the electrogenic transport of potassium into the cytoplasm. This subunit acts as a catalytic chaperone that increases the ATP-binding affinity of the ATP-hydrolyzing subunit KdpB by the formation of a transient KdpB/KdpC/ATP ternary complex. In Pseudomonas aeruginosa (strain ATCC 15692 / DSM 22644 / CIP 104116 / JCM 14847 / LMG 12228 / 1C / PRS 101 / PAO1), this protein is Potassium-transporting ATPase KdpC subunit.